A 787-amino-acid polypeptide reads, in one-letter code: Penicillin-binding protein 1A (787 aa).

The Cytoplasmic portion of the chain corresponds to 1-6 (MYKSLF). The chain crosses the membrane as a helical; Signal-anchor for type II membrane protein span at residues 7-27 (LCLKIFAVLILIGCSVTAYII). The Periplasmic portion of the chain corresponds to 28–787 (YHYSHDLPDY…GMLDQSQEIY (760 aa)). The transglycosylase stretch occupies residues 49–220 (TRIYSRDGKL…SELNPDKNYS (172 aa)). Residue Glu87 is the Proton donor; for transglycosylase activity of the active site. The interval 398–711 (DVIVVEPIKD…SNVVLPIFID (314 aa)) is transpeptidase. The active-site Acyl-ester intermediate; for transpeptidase activity is the Ser457.

It in the N-terminal section; belongs to the glycosyltransferase 51 family. The protein in the C-terminal section; belongs to the transpeptidase family.

It is found in the cell inner membrane. The catalysed reaction is [GlcNAc-(1-&gt;4)-Mur2Ac(oyl-L-Ala-gamma-D-Glu-L-Lys-D-Ala-D-Ala)](n)-di-trans,octa-cis-undecaprenyl diphosphate + beta-D-GlcNAc-(1-&gt;4)-Mur2Ac(oyl-L-Ala-gamma-D-Glu-L-Lys-D-Ala-D-Ala)-di-trans,octa-cis-undecaprenyl diphosphate = [GlcNAc-(1-&gt;4)-Mur2Ac(oyl-L-Ala-gamma-D-Glu-L-Lys-D-Ala-D-Ala)](n+1)-di-trans,octa-cis-undecaprenyl diphosphate + di-trans,octa-cis-undecaprenyl diphosphate + H(+). It carries out the reaction Preferential cleavage: (Ac)2-L-Lys-D-Ala-|-D-Ala. Also transpeptidation of peptidyl-alanyl moieties that are N-acyl substituents of D-alanine.. Its pathway is cell wall biogenesis; peptidoglycan biosynthesis. Cell wall formation. Synthesis of cross-linked peptidoglycan from the lipid intermediates. The enzyme has a penicillin-insensitive transglycosylase N-terminal domain (formation of linear glycan strands) and a penicillin-sensitive transpeptidase C-terminal domain (cross-linking of the peptide subunits). In Rickettsia prowazekii (strain Madrid E), this protein is Penicillin-binding protein 1A (mrcA).